The primary structure comprises 484 residues: Calcium-dependent protein kinase 31 (484 aa).

The N-myristoyl glycine moiety is linked to residue Gly2. The Protein kinase domain maps to 28–290 (YILGDELGQG…AAEVLGHPWM (263 aa)). ATP contacts are provided by residues 34-42 (LGQGQFGIT) and Lys57. Asp156 acts as the Proton acceptor in catalysis. Position 196 is a phosphoserine (Ser196). An autoinhibitory domain region spans residues 295 to 325 (ASDKPIDGVVLSRLKQFRDMNKLKKVALKVI). EF-hand domains lie at 332-367 (EEIK…LGSN), 368-403 (LSKT…RYRL), 404-439 (DRDD…HGVG), and 444-474 (IKQI…GSSL). Residues Asp345, Asp347, Ser349, Thr351, Glu356, Asp381, Asp383, Asn385, Thr387, Glu392, Asp417, Asp419, Asp421, His423, Glu428, Asp452, Asp454, Asp456, Lys458, and Glu463 each contribute to the Ca(2+) site.

Belongs to the protein kinase superfamily. Ser/Thr protein kinase family. CDPK subfamily.

Its subcellular location is the membrane. The enzyme catalyses L-seryl-[protein] + ATP = O-phospho-L-seryl-[protein] + ADP + H(+). The catalysed reaction is L-threonyl-[protein] + ATP = O-phospho-L-threonyl-[protein] + ADP + H(+). With respect to regulation, activated by calcium. Autophosphorylation may play an important role in the regulation of the kinase activity. May play a role in signal transduction pathways that involve calcium as a second messenger. The polypeptide is Calcium-dependent protein kinase 31 (CPK31) (Arabidopsis thaliana (Mouse-ear cress)).